The following is a 651-amino-acid chain: Probable export ATP-binding/permease protein Pfl01_2215 (651 aa).

Residues 6–244 (LQLTGISRSF…LSNEDAVPKS (239 aa)) enclose the ABC transporter domain. 42–49 (GASGSGKS) is an ATP binding site. A run of 5 helical transmembrane segments spans residues 250–270 (LVASLGLFKEAFNMAWVALIS), 276–296 (LLTMLGIVIGITSVVSISAIG), 524–544 (LALLLSLIAVISLVVGGIGVM), 585–605 (LGGAIGISLSYAIGHLFSLFI), and 614–634 (LTSVLTAVICSTLIGIVFGFV).

The protein belongs to the ABC transporter superfamily. Macrolide exporter (TC 3.A.1.122) family. As to quaternary structure, probably part of a tripartite efflux system, which is composed of an inner membrane transporter, a periplasmic membrane fusion protein, and an outer membrane component.

It localises to the cell inner membrane. Functionally, probably part of a tripartite efflux system. The sequence is that of Probable export ATP-binding/permease protein Pfl01_2215 from Pseudomonas fluorescens (strain Pf0-1).